Reading from the N-terminus, the 327-residue chain is Acetyl-coenzyme A carboxylase carboxyl transferase subunit alpha (327 aa).

Residues 46–299 (LEARAIQLRR…RQVLLRHLKD (254 aa)) form the CoA carboxyltransferase C-terminal domain.

Belongs to the AccA family. Acetyl-CoA carboxylase is a heterohexamer composed of biotin carboxyl carrier protein (AccB), biotin carboxylase (AccC) and two subunits each of ACCase subunit alpha (AccA) and ACCase subunit beta (AccD).

It localises to the cytoplasm. It catalyses the reaction N(6)-carboxybiotinyl-L-lysyl-[protein] + acetyl-CoA = N(6)-biotinyl-L-lysyl-[protein] + malonyl-CoA. The protein operates within lipid metabolism; malonyl-CoA biosynthesis; malonyl-CoA from acetyl-CoA: step 1/1. Functionally, component of the acetyl coenzyme A carboxylase (ACC) complex. First, biotin carboxylase catalyzes the carboxylation of biotin on its carrier protein (BCCP) and then the CO(2) group is transferred by the carboxyltransferase to acetyl-CoA to form malonyl-CoA. The sequence is that of Acetyl-coenzyme A carboxylase carboxyl transferase subunit alpha from Synechococcus elongatus (strain ATCC 33912 / PCC 7942 / FACHB-805) (Anacystis nidulans R2).